A 298-amino-acid polypeptide reads, in one-letter code: tRNA pseudouridine synthase-like 1 (298 aa).

Asp-60 acts as the Nucleophile in catalysis. Substrate is bound at residue Tyr-124.

This sequence belongs to the tRNA pseudouridine synthase TruA family.

It catalyses the reaction a uridine in tRNA = a pseudouridine in tRNA. The protein is tRNA pseudouridine synthase-like 1 (pusl1) of Xenopus laevis (African clawed frog).